Reading from the N-terminus, the 332-residue chain is MVLKLFLSKRPIFLHPHCVSSSCRNSDTTIRLSRRIATMSENKSPLLERARNIVPHLETHRHKGQAGRIGIVGGSLEYTGAPYFAAISALKVGADLVHVFCLQAAAQVIKSYSPELIVHPLLDSNDATMQIEPWLERLHVLVIGPGLGRDRLILQTVSELIKICRQLQKPLVIDADGLFLITHDISLVKDYYGVILTPNAIEFCRLFGNDRDRIMQTLEKLGRGVTVIEKGLNDRIYDSLTLEKYECPQGGSGRRCGGQGDLLAGALATFYFWALECKQEISPAVVACFAASYLTKNCNTYAFKAKGRSMTCTDMIEQIHNVFDDIFEHKKE.

A YjeF C-terminal domain is found at 46–326; that stretch reads LLERARNIVP…EQIHNVFDDI (281 aa). (6S)-NADPHX is bound by residues Gly-146 and 199–205; that span reads NAIEFCR. Residues 230 to 234 and 251 to 260 contribute to the ATP site; these read KGLND and GSGRRCGGQG. (6S)-NADPHX is bound at residue Asp-261.

This sequence belongs to the NnrD/CARKD family. The cofactor is Mg(2+).

The catalysed reaction is (6S)-NADHX + ATP = ADP + phosphate + NADH + H(+). The enzyme catalyses (6S)-NADPHX + ATP = ADP + phosphate + NADPH + H(+). Catalyzes the dehydration of the S-form of NAD(P)HX at the expense of ATP, which is converted to ADP. Together with NAD(P)HX epimerase, which catalyzes the epimerization of the S- and R-forms, the enzyme allows the repair of both epimers of NAD(P)HX, a damaged form of NAD(P)H that is a result of enzymatic or heat-dependent hydration. This chain is ATP-dependent (S)-NAD(P)H-hydrate dehydratase, found in Aedes aegypti (Yellowfever mosquito).